Consider the following 290-residue polypeptide: Nitrogenase iron protein 2 (290 aa).

10–17 (GKGGIGKS) is a binding site for ATP. Residue cysteine 98 coordinates [4Fe-4S] cluster. The residue at position 101 (arginine 101) is an ADP-ribosylarginine; by dinitrogenase reductase ADP-ribosyltransferase. Cysteine 133 provides a ligand contact to [4Fe-4S] cluster.

Belongs to the NifH/BchL/ChlL family. In terms of assembly, homodimer. The cofactor is [4Fe-4S] cluster. Post-translationally, the reversible ADP-ribosylation of Arg-101 inactivates the nitrogenase reductase and regulates nitrogenase activity.

The catalysed reaction is N2 + 8 reduced [2Fe-2S]-[ferredoxin] + 16 ATP + 16 H2O = H2 + 8 oxidized [2Fe-2S]-[ferredoxin] + 2 NH4(+) + 16 ADP + 16 phosphate + 6 H(+). Functionally, the key enzymatic reactions in nitrogen fixation are catalyzed by the nitrogenase complex, which has 2 components: the iron protein (component 2) and a component 1 which is either a molybdenum-iron protein, a vanadium-iron, or an iron-iron protein. The sequence is that of Nitrogenase iron protein 2 (vnfH) from Azotobacter vinelandii.